Consider the following 132-residue polypeptide: Small ribosomal subunit protein uS11 (132 aa).

The segment covering 1–16 (MAAGMKGKRSRRRKER) has biased composition (basic residues). The disordered stretch occupies residues 1–20 (MAAGMKGKRSRRRKERKNVE).

It belongs to the universal ribosomal protein uS11 family. In terms of assembly, part of the 30S ribosomal subunit. Interacts with proteins S7 and S18. Binds to IF-3.

In terms of biological role, located on the platform of the 30S subunit, it bridges several disparate RNA helices of the 16S rRNA. Forms part of the Shine-Dalgarno cleft in the 70S ribosome. This chain is Small ribosomal subunit protein uS11, found in Clostridium botulinum (strain Kyoto / Type A2).